The following is a 190-amino-acid chain: Ribose 1,5-bisphosphate phosphokinase PhnN (190 aa).

A disordered region spans residues 135-159; sequence RGREPEPGIGQRLARPDPAPGHQAD.

It belongs to the ribose 1,5-bisphosphokinase family.

It carries out the reaction alpha-D-ribose 1,5-bisphosphate + ATP = 5-phospho-alpha-D-ribose 1-diphosphate + ADP. Its pathway is metabolic intermediate biosynthesis; 5-phospho-alpha-D-ribose 1-diphosphate biosynthesis; 5-phospho-alpha-D-ribose 1-diphosphate from D-ribose 5-phosphate (route II): step 3/3. Functionally, catalyzes the phosphorylation of ribose 1,5-bisphosphate to 5-phospho-D-ribosyl alpha-1-diphosphate (PRPP). This is Ribose 1,5-bisphosphate phosphokinase PhnN from Pseudofrankia inefficax (strain DSM 45817 / CECT 9037 / DDB 130130 / EuI1c) (Frankia inefficax).